We begin with the raw amino-acid sequence, 89 residues long: Small ribosomal subunit protein uS15 (89 aa).

This sequence belongs to the universal ribosomal protein uS15 family. In terms of assembly, part of the 30S ribosomal subunit. Forms a bridge to the 50S subunit in the 70S ribosome, contacting the 23S rRNA.

In terms of biological role, one of the primary rRNA binding proteins, it binds directly to 16S rRNA where it helps nucleate assembly of the platform of the 30S subunit by binding and bridging several RNA helices of the 16S rRNA. Forms an intersubunit bridge (bridge B4) with the 23S rRNA of the 50S subunit in the ribosome. The protein is Small ribosomal subunit protein uS15 of Haemophilus influenzae (strain PittGG).